The following is a 90-amino-acid chain: Cell division topological specificity factor (90 aa).

This sequence belongs to the MinE family.

In terms of biological role, prevents the cell division inhibition by proteins MinC and MinD at internal division sites while permitting inhibition at polar sites. This ensures cell division at the proper site by restricting the formation of a division septum at the midpoint of the long axis of the cell. In Brucella abortus (strain S19), this protein is Cell division topological specificity factor.